The following is a 233-amino-acid chain: Ribonuclease HII (233 aa).

The RNase H type-2 domain occupies 21–211 (KVIAGVDEVG…LDALPQWRHL (191 aa)). A divalent metal cation-binding residues include Asp27, Glu28, and Asp119.

It belongs to the RNase HII family. The cofactor is Mn(2+). Mg(2+) is required as a cofactor.

It localises to the cytoplasm. It catalyses the reaction Endonucleolytic cleavage to 5'-phosphomonoester.. Its function is as follows. Endonuclease that specifically degrades the RNA of RNA-DNA hybrids. The protein is Ribonuclease HII of Streptomyces avermitilis (strain ATCC 31267 / DSM 46492 / JCM 5070 / NBRC 14893 / NCIMB 12804 / NRRL 8165 / MA-4680).